We begin with the raw amino-acid sequence, 432 residues long: Keratin, type I cytoskeletal 18-B (432 aa).

Over residues 1-21 the composition is skewed to low complexity; sequence MSYSRSMYSSSSVVGGSPYRS. The disordered stretch occupies residues 1 to 44; that stretch reads MSYSRSMYSSSSVVGGSPYRSLSSAPRFAPGSSAASVHAGPGGS. The interval 2 to 82 is head; the sequence is SYSRSMYSSS…NVSLMGGAQN (81 aa). The interval 83–118 is coil 1A; it reads EKETMQDLNDRLASYLERVRSLETANKELEVQIRQH. The IF rod domain maps to 83 to 393; sequence EKETMQDLND…RLLEGDSFDL (311 aa). Residues 119 to 134 are linker 1; the sequence is TEKKGPAKDWSPYYKA. Positions 135–226 are coil 1B; sequence IEDLKKQVFD…KNHQDDVNEL (92 aa). A linker 12 region spans residues 227-250; sequence QAQIARSAVTVEVDAPKSQDLGKI. The segment at 251 to 388 is coil 2; that stretch reads MAELRAQYDG…IHTYRRLLEG (138 aa). The interval 389–432 is tail; that stretch reads DSFDLQDAVPTVTTQTVKKVITTTQRIVDGKVVAESNDTEVLKA.

Belongs to the intermediate filament family. Heterotetramer of two type I and two type II keratins. Keratin-18 associates with keratin-8. Post-translationally, phosphorylated. Proteolytically cleaved by caspases during epithelial cell apoptosis.

Functionally, when phosphorylated, plays a role in filament reorganization. This Xenopus laevis (African clawed frog) protein is Keratin, type I cytoskeletal 18-B (krt18-b).